A 242-amino-acid chain; its full sequence is Pyridoxine 5'-phosphate synthase (242 aa).

Asn7 lines the 3-amino-2-oxopropyl phosphate pocket. 9-10 (DH) is a binding site for 1-deoxy-D-xylulose 5-phosphate. Arg18 serves as a coordination point for 3-amino-2-oxopropyl phosphate. The Proton acceptor role is filled by His43. 1-deoxy-D-xylulose 5-phosphate contacts are provided by Arg45 and His50. The active-site Proton acceptor is Glu70. Residue Thr100 participates in 1-deoxy-D-xylulose 5-phosphate binding. His191 (proton donor) is an active-site residue. Residues Gly192 and 213 to 214 (GH) contribute to the 3-amino-2-oxopropyl phosphate site.

It belongs to the PNP synthase family. In terms of assembly, homooctamer; tetramer of dimers.

The protein localises to the cytoplasm. It catalyses the reaction 3-amino-2-oxopropyl phosphate + 1-deoxy-D-xylulose 5-phosphate = pyridoxine 5'-phosphate + phosphate + 2 H2O + H(+). Its pathway is cofactor biosynthesis; pyridoxine 5'-phosphate biosynthesis; pyridoxine 5'-phosphate from D-erythrose 4-phosphate: step 5/5. In terms of biological role, catalyzes the complicated ring closure reaction between the two acyclic compounds 1-deoxy-D-xylulose-5-phosphate (DXP) and 3-amino-2-oxopropyl phosphate (1-amino-acetone-3-phosphate or AAP) to form pyridoxine 5'-phosphate (PNP) and inorganic phosphate. The polypeptide is Pyridoxine 5'-phosphate synthase (Chromobacterium violaceum (strain ATCC 12472 / DSM 30191 / JCM 1249 / CCUG 213 / NBRC 12614 / NCIMB 9131 / NCTC 9757 / MK)).